The following is a 554-amino-acid chain: Hydroxylamine reductase (554 aa).

Residues C3, C6, C18, and C25 each contribute to the [2Fe-2S] cluster site. Residues H252, E276, C320, C408, C436, C461, E495, and K497 each coordinate hybrid [4Fe-2O-2S] cluster. C408 carries the post-translational modification Cysteine persulfide.

Belongs to the HCP family. The cofactor is [2Fe-2S] cluster. Hybrid [4Fe-2O-2S] cluster serves as cofactor.

The protein localises to the cytoplasm. The catalysed reaction is A + NH4(+) + H2O = hydroxylamine + AH2 + H(+). Functionally, catalyzes the reduction of hydroxylamine to form NH(3) and H(2)O. The protein is Hydroxylamine reductase of Shewanella baltica (strain OS155 / ATCC BAA-1091).